Consider the following 130-residue polypeptide: Fumarate reductase subunit C (130 aa).

A run of 3 helical transmembrane segments spans residues 30-50 (EGTS…VFAL), 60-80 (FVSF…LFAA), and 110-130 (IKAL…VALL).

It belongs to the FrdC family. Part of an enzyme complex containing four subunits: a flavoprotein (FrdA), an iron-sulfur protein (FrdB), and two hydrophobic anchor proteins (FrdC and FrdD).

It is found in the cell inner membrane. In terms of biological role, two distinct, membrane-bound, FAD-containing enzymes are responsible for the catalysis of fumarate and succinate interconversion; fumarate reductase is used in anaerobic growth, and succinate dehydrogenase is used in aerobic growth. Anchors the catalytic components of the fumarate reductase complex to the cell inner membrane, binds quinones. The chain is Fumarate reductase subunit C from Yersinia pseudotuberculosis serotype O:1b (strain IP 31758).